We begin with the raw amino-acid sequence, 274 residues long: 2,3,4,5-tetrahydropyridine-2,6-dicarboxylate N-succinyltransferase (274 aa).

Arginine 104 and aspartate 141 together coordinate substrate.

Belongs to the transferase hexapeptide repeat family. Homotrimer.

The protein resides in the cytoplasm. The enzyme catalyses (S)-2,3,4,5-tetrahydrodipicolinate + succinyl-CoA + H2O = (S)-2-succinylamino-6-oxoheptanedioate + CoA. It functions in the pathway amino-acid biosynthesis; L-lysine biosynthesis via DAP pathway; LL-2,6-diaminopimelate from (S)-tetrahydrodipicolinate (succinylase route): step 1/3. This chain is 2,3,4,5-tetrahydropyridine-2,6-dicarboxylate N-succinyltransferase (dapD), found in Escherichia coli O157:H7.